The chain runs to 393 residues: Phosphoglycerate kinase (393 aa).

Substrate-binding positions include 22 to 24 (DFN), Arg-37, 60 to 63 (HLGR), Arg-119, and Arg-152. ATP-binding positions include Lys-202, Gly-293, Glu-324, and 350-353 (GGDS).

It belongs to the phosphoglycerate kinase family. Monomer.

The protein resides in the cytoplasm. The catalysed reaction is (2R)-3-phosphoglycerate + ATP = (2R)-3-phospho-glyceroyl phosphate + ADP. The protein operates within carbohydrate degradation; glycolysis; pyruvate from D-glyceraldehyde 3-phosphate: step 2/5. The chain is Phosphoglycerate kinase from Borreliella afzelii (strain PKo) (Borrelia afzelii).